The sequence spans 159 residues: ATP synthase subunit b (159 aa).

A helical transmembrane segment spans residues 4–24; sequence VGINGTLIVQLVTFVILVALL.

This sequence belongs to the ATPase B chain family. As to quaternary structure, F-type ATPases have 2 components, F(1) - the catalytic core - and F(0) - the membrane proton channel. F(1) has five subunits: alpha(3), beta(3), gamma(1), delta(1), epsilon(1). F(0) has three main subunits: a(1), b(2) and c(10-14). The alpha and beta chains form an alternating ring which encloses part of the gamma chain. F(1) is attached to F(0) by a central stalk formed by the gamma and epsilon chains, while a peripheral stalk is formed by the delta and b chains.

The protein resides in the cell inner membrane. In terms of biological role, f(1)F(0) ATP synthase produces ATP from ADP in the presence of a proton or sodium gradient. F-type ATPases consist of two structural domains, F(1) containing the extramembraneous catalytic core and F(0) containing the membrane proton channel, linked together by a central stalk and a peripheral stalk. During catalysis, ATP synthesis in the catalytic domain of F(1) is coupled via a rotary mechanism of the central stalk subunits to proton translocation. Functionally, component of the F(0) channel, it forms part of the peripheral stalk, linking F(1) to F(0). This Acidithiobacillus ferridurans protein is ATP synthase subunit b.